Consider the following 107-residue polypeptide: Nucleoid-associated protein amb4104 (107 aa).

Belongs to the YbaB/EbfC family. In terms of assembly, homodimer.

Its subcellular location is the cytoplasm. The protein resides in the nucleoid. In terms of biological role, binds to DNA and alters its conformation. May be involved in regulation of gene expression, nucleoid organization and DNA protection. The chain is Nucleoid-associated protein amb4104 from Paramagnetospirillum magneticum (strain ATCC 700264 / AMB-1) (Magnetospirillum magneticum).